We begin with the raw amino-acid sequence, 515 residues long: Phenylalanine--tRNA ligase beta subunit (515 aa).

The region spanning 263-334 (HEYVKIYVDE…IVMGYNQMPR (72 aa)) is the B5 domain. Residues Asn312, Asp318, Glu321, and Asp322 each contribute to the Mg(2+) site.

This sequence belongs to the phenylalanyl-tRNA synthetase beta subunit family. Type 2 subfamily. In terms of assembly, tetramer of two alpha and two beta subunits. The cofactor is Mg(2+).

It localises to the cytoplasm. The enzyme catalyses tRNA(Phe) + L-phenylalanine + ATP = L-phenylalanyl-tRNA(Phe) + AMP + diphosphate + H(+). The polypeptide is Phenylalanine--tRNA ligase beta subunit (Pyrobaculum aerophilum (strain ATCC 51768 / DSM 7523 / JCM 9630 / CIP 104966 / NBRC 100827 / IM2)).